The sequence spans 360 residues: Aminomethyltransferase (360 aa).

The protein belongs to the GcvT family. The glycine cleavage system is composed of four proteins: P, T, L and H.

It carries out the reaction N(6)-[(R)-S(8)-aminomethyldihydrolipoyl]-L-lysyl-[protein] + (6S)-5,6,7,8-tetrahydrofolate = N(6)-[(R)-dihydrolipoyl]-L-lysyl-[protein] + (6R)-5,10-methylene-5,6,7,8-tetrahydrofolate + NH4(+). Its function is as follows. The glycine cleavage system catalyzes the degradation of glycine. This is Aminomethyltransferase from Legionella pneumophila (strain Paris).